Consider the following 122-residue polypeptide: Large ribosomal subunit protein bL12 (122 aa).

Belongs to the bacterial ribosomal protein bL12 family. As to quaternary structure, homodimer. Part of the ribosomal stalk of the 50S ribosomal subunit. Forms a multimeric L10(L12)X complex, where L10 forms an elongated spine to which 2 to 4 L12 dimers bind in a sequential fashion. Binds GTP-bound translation factors.

Functionally, forms part of the ribosomal stalk which helps the ribosome interact with GTP-bound translation factors. Is thus essential for accurate translation. This Mesoplasma florum (strain ATCC 33453 / NBRC 100688 / NCTC 11704 / L1) (Acholeplasma florum) protein is Large ribosomal subunit protein bL12.